The sequence spans 1391 residues: MPSVLGSMMVASTSAAASLQEALENAGRLIDRQLQEDRMYPDLSELLMVSAPNSPTVSGMSDMDYPLQGPGLLSVPSLPEISTIRRVPLPPELVEQFGHMQCNCMMGVFPPISRAWLTIDSDIFMWNYEDGGDLAYFDGLSETILAVGLVKPKAGIFQPHVRHLLVLATPVDIVILGLSYANVQTGSGILNDSMCGGMQLLPDPLYSLPTDNTYLLTITSTDNGRIFLAGKDGCLYEVAYQAEAGWFSQRCRKINHSKSSLSFLVPSLLQFTFSEDDPIVQIEIDNSRNILYTRSEKGVIQVYDLGHDGQGMSRVASVSQNAIVSAAGNIARTIDRSVFKPIVQIAVIESSESLDCQLLAVTHAGVRLYFSTCPFRQPLARPNTLTLVHVRLPPGFSASSTVEKPSKVHKALYSKGILLMTASENEDNDILWCVNHDTFPFQKPMMETQMTTRVDGHSWALSAIDELKVDKIITPLNKDHIPITDSPVVVQQHMLPPKKFVLLSAQGSLMFHKLRPVDQLRHLLVSNVGGDGEEIERFFKLHQEDQACATCLILACSTAACDREVSAWATRAFFRYGGEAQMRFPATLPTPSNVGPILGSPMYSSSPVPSGSPYPNPSSLGTPSHGAQPPTMSTPMCAVGSPAMQAASMSGLTGPEIVYSGKHNGICIYFSRIMGNIWDASLVVERVFKSSNREITAIESSVPVQLLESVLQELKGLQEFLDRNSQFSGGPLGNPNTTARVQQRLVGFMRPENGNTQQMQQELQRKFQEAQLSEKISLQAIQQLVRKSYQALALWKLLCEHQFSVIVGELQKEFQEQLKITTFKDLVIRDKEVTGALIASLINCYIRDNAAVDGISLHLQDTCPLLYSTDDAVCSKANELLQRSRQVQSKTERERMLRESLKEYQKISNQVDLPSVCAQYRQVRFYEGVVELSLTAAEKKDPQGLGLHFYKHGEPEEDVVGLQTFQERLNSYKCITDTLQELVNQSKAAPQSPSVPKKPGPPVLSSDPNMLSNEEAGHHFEQMLKLAQRSKDELFSIALYNWLIQADLADKLLQIASPFLEPHLVRMARVDQNRVRYMDLLWRYYEKNRSFSSAARVLSKLADMHSTEISLQQRLEYIARAILSAKSSTAISSIAADGEFLHELEEKMEVARIQLQIQETLQRQYSHHSSVQDAISQLDSELMDITKLYGEFADPFKLAECKLAVIHCAGYSDPILVHTLWQDIIEKELNDSVALSSSDRMHALSLKLVLLGKIYAGTPRFFPLDFIVQFLEQQVCTLNWDVGFVIQTMNEIGVPLPRLLEVYDQLFKSRDPFWNRVKSPLHLLDCIHVLLTRYVENPSLVLNCERRRFTNLCLDAVCGYLVELQSMSSSVAVQAITGNFKSLQAKLERLH.

Ser526 is a glycosylation site (O-linked (GlcNAc) serine). Disordered stretches follow at residues 604–630 (SSSP…AQPP) and 985–1012 (QSKA…NMLS). At Ser1057 the chain carries Phosphoserine.

The protein belongs to the non-repetitive/WGA-negative nucleoporin family. As to quaternary structure, interacts with GLE1 and NUP35/NUP53. Able to form a heterotrimer with GLE1 and NUP42 in vitro. Forms a complex with NUP35, NUP93, NUP205 and lamin B. Phosphorylated. Phosphorylation and dephosphorylation may be important for the function of NUP155 and may play a role in the reversible disassembly of the nuclear pore complex during mitosis. In terms of processing, disulfide-linked to NUP62. The inner channel of the NPC has a different redox environment from the cytoplasm and allows the formation of interchain disulfide bonds between some nucleoporins, the significant increase of these linkages upon oxidative stress reduces the permeability of the NPC.

Its subcellular location is the nucleus. It is found in the nuclear pore complex. The protein localises to the nucleus membrane. Functionally, essential component of nuclear pore complex. Could be essessential for embryogenesis. Nucleoporins may be involved both in binding and translocating proteins during nucleocytoplasmic transport. The protein is Nuclear pore complex protein Nup155 (Nup155) of Mus musculus (Mouse).